Here is a 641-residue protein sequence, read N- to C-terminus: SH2 domain-containing protein A (641 aa).

A disordered region spans residues 355–384 (VNGNGTSMEWRPQNHEEDNSSTDSENTEMR). The 95-residue stretch at 547-641 (WIEGFVTKEE…SRLGRIIRGI (95 aa)) folds into the SH2 domain.

Post-translationally, phosphorylated on tyrosine residues. As to expression, expressed in roots, leaves, stems and flowers.

The sequence is that of SH2 domain-containing protein A from Arabidopsis thaliana (Mouse-ear cress).